The sequence spans 151 residues: Methylated-DNA--protein-cysteine methyltransferase (151 aa).

The Nucleophile; methyl group acceptor role is filled by Cys-119.

It belongs to the MGMT family.

It is found in the cytoplasm. It carries out the reaction a 6-O-methyl-2'-deoxyguanosine in DNA + L-cysteinyl-[protein] = S-methyl-L-cysteinyl-[protein] + a 2'-deoxyguanosine in DNA. The enzyme catalyses a 4-O-methyl-thymidine in DNA + L-cysteinyl-[protein] = a thymidine in DNA + S-methyl-L-cysteinyl-[protein]. Functionally, involved in the cellular defense against the biological effects of O6-methylguanine (O6-MeG) and O4-methylthymine (O4-MeT) in DNA. Repairs the methylated nucleobase in DNA by stoichiometrically transferring the methyl group to a cysteine residue in the enzyme. This is a suicide reaction: the enzyme is irreversibly inactivated. The polypeptide is Methylated-DNA--protein-cysteine methyltransferase (Saccharolobus islandicus (strain L.S.2.15 / Lassen #1) (Sulfolobus islandicus)).